A 134-amino-acid chain; its full sequence is Phosphoribosyl-AMP cyclohydrolase (134 aa).

D77 serves as a coordination point for Mg(2+). C78 contacts Zn(2+). The Mg(2+) site is built by D79 and D81. 2 residues coordinate Zn(2+): C95 and C102.

This sequence belongs to the PRA-CH family. As to quaternary structure, homodimer. It depends on Mg(2+) as a cofactor. Zn(2+) serves as cofactor.

It localises to the cytoplasm. It catalyses the reaction 1-(5-phospho-beta-D-ribosyl)-5'-AMP + H2O = 1-(5-phospho-beta-D-ribosyl)-5-[(5-phospho-beta-D-ribosylamino)methylideneamino]imidazole-4-carboxamide. The protein operates within amino-acid biosynthesis; L-histidine biosynthesis; L-histidine from 5-phospho-alpha-D-ribose 1-diphosphate: step 3/9. Its function is as follows. Catalyzes the hydrolysis of the adenine ring of phosphoribosyl-AMP. The sequence is that of Phosphoribosyl-AMP cyclohydrolase from Pseudomonas aeruginosa (strain LESB58).